The sequence spans 459 residues: Putative metabolite transport protein YdjK (459 aa).

Over Met1 to Met25 the chain is Cytoplasmic. Residues Phe26 to Leu46 form a helical membrane-spanning segment. The Periplasmic segment spans residues Ala47 to Thr60. The helical transmembrane segment at Ala61–Ile81 threads the bilayer. Over Gly82–Ala90 the chain is Cytoplasmic. The helical transmembrane segment at Phe91–Met111 threads the bilayer. Residue Asp112 is a topological domain, periplasmic. The helical transmembrane segment at Phe113–Phe133 threads the bilayer. Topologically, residues Ala134 to Ser153 are cytoplasmic. A helical transmembrane segment spans residues Phe154 to Ile174. The Periplasmic segment spans residues Ser175–Arg181. Residues Val182–Phe202 form a helical membrane-spanning segment. The Cytoplasmic segment spans residues Pro203–Cys271. A helical membrane pass occupies residues Val272–Met292. Topologically, residues Thr293–Ser301 are periplasmic. The helical transmembrane segment at Ile302–Val322 threads the bilayer. The Cytoplasmic portion of the chain corresponds to Met323 to Lys329. Residues Thr330–Thr350 traverse the membrane as a helical segment. A topological domain (periplasmic) is located at residue Ser351. The helical transmembrane segment at Met352–Tyr372 threads the bilayer. Residues Ala373–Arg399 lie on the Cytoplasmic side of the membrane. Transmembrane regions (helical) follow at residues Ile400 to Gly420 and Val421 to Ile441. Topologically, residues Glu442–Lys459 are cytoplasmic.

Belongs to the major facilitator superfamily. Sugar transporter (TC 2.A.1.1) family.

Its subcellular location is the cell inner membrane. The protein is Putative metabolite transport protein YdjK (ydjK) of Escherichia coli (strain K12).